The following is a 170-amino-acid chain: Plastocyanin, chloroplastic (170 aa).

The transit peptide at 1-71 directs the protein to the chloroplast; the sequence is MATVTSAAVA…SAMLASNAMA (71 aa). The 99-residue stretch at 72–170 folds into the Plastocyanin-like domain; sequence LEVLLGGDDG…AGMVGKVTVN (99 aa). Residues histidine 108, cysteine 155, histidine 158, and methionine 163 each contribute to the Cu cation site.

This sequence belongs to the plastocyanin family. Requires Cu(2+) as cofactor.

It localises to the plastid. The protein resides in the chloroplast thylakoid membrane. Participates in electron transfer between P700 and the cytochrome b6-f complex in photosystem I. This Solanum lycopersicum (Tomato) protein is Plastocyanin, chloroplastic (PETE).